The following is a 295-amino-acid chain: Release factor glutamine methyltransferase (295 aa).

Residues glycine 127 to glycine 131, aspartate 150, phenylalanine 179, and asparagine 195 contribute to the S-adenosyl-L-methionine site. Asparagine 195 to tyrosine 198 contacts substrate.

The protein belongs to the protein N5-glutamine methyltransferase family. PrmC subfamily.

It carries out the reaction L-glutaminyl-[peptide chain release factor] + S-adenosyl-L-methionine = N(5)-methyl-L-glutaminyl-[peptide chain release factor] + S-adenosyl-L-homocysteine + H(+). Methylates the class 1 translation termination release factors RF1/PrfA and RF2/PrfB on the glutamine residue of the universally conserved GGQ motif. In Nitratidesulfovibrio vulgaris (strain ATCC 29579 / DSM 644 / CCUG 34227 / NCIMB 8303 / VKM B-1760 / Hildenborough) (Desulfovibrio vulgaris), this protein is Release factor glutamine methyltransferase.